Here is a 694-residue protein sequence, read N- to C-terminus: MTDGNLSTSMNGVALMGILDGRPGDSLQELQHLSIKAVPRSLSVPDYGPTLKLGALEDRHSLQSVDSGIPTLEIGNPEPVPCSVVHVKRKQSESEIIPERAFQSACPLPSCTPSAPTGSEREQAVRKSSTFPRTGYDSVKLYSPTSKALSRSDDVSVCSVSSLGTELSTTLSVSNEDILDLMVTSNSSAIVTLENDDDPQFTDVTLSSIKETSDLHQQDCVAETEEGRKLRLLQPFSHFFTRNLLARKQNARLDRQRDLGWKLFGKVPLRETAQKDSKKTQKEYEDKAGRPSRPPSPKQNVRKNLDFEPLSTTALILEDRPANLPAKPAEEAQKHRQQYEEMVVQAKKRELKEAQRRKKQLEERCKVEESIGNAVLTWNNEILPNWETMWCSKKVRDLWWQGIPPSVRGKVWSLAIGNELNITHELFDICLARAKERWRSLSTGGSEVENEDAGFSAADREASLELIKLDISRTFPNLCIFQQGGPYHDMLHSILGAYTCYRPDVGYVQGMSFIAAVLILNLDTADAFIAFSNLLNKPCQMAFFRVDHGLMLTYFAAFEVFFEENLPKLFAHFKKNNLTADIYLIDWIFTLYSKSLPLDLACRIWDVFCRDGEEFLFRTALGILKLFEDILTRMDFIHSAQFLTRLPEDLPADDVFAAISTVQMQSRNKKWAQVLSALQKDSREMEEGSPSVRD.

Phosphoserine is present on S92. Disordered stretches follow at residues 108–130 (LPSCTPSAPTGSEREQAVRKSST) and 272–305 (TAQKDSKKTQKEYEDKAGRPSRPPSPKQNVRKNL). Positions 272–289 (TAQKDSKKTQKEYEDKAG) are enriched in basic and acidic residues. S296 carries the post-translational modification Phosphoserine. Residues 402 to 612 (GIPPSVRGKV…RIWDVFCRDG (211 aa)) enclose the Rab-GAP TBC domain.

Interacts with ULK1. May interact with RAB11A and RAB11B, but does not exhibit any GTPase-activating activity toward these proteins. Interacts with TRAPPC8. As to expression, pubMed:15758561 detected expression at the stage of sexual maturation in testis, mainly in the spermatocytes. No expression detected in the ovary, brain, heart, lung, liver and kidney. PubMed:15200410 detected expression in brain, heart, lung, liver, spleen and kidney but not in small intestine.

It localises to the golgi apparatus. The protein resides in the cis-Golgi network. It is found in the trans-Golgi network. Plays a role in the regulation of starvation-induced autophagosome formation. Together with the TRAPPIII complex, regulates a constitutive trafficking step from peripheral recycling endosomes to the early Golgi, maintaining the cycling pool of ATG9 required for initiation of autophagy. This Rattus norvegicus (Rat) protein is TBC1 domain family member 14 (Tbc1d14).